Consider the following 430-residue polypeptide: Trigger factor (430 aa).

The PPIase FKBP-type domain maps to 157 to 242 (GDLVALETWS…AVEVSEPVLP (86 aa)).

Belongs to the FKBP-type PPIase family. Tig subfamily.

The protein localises to the cytoplasm. The enzyme catalyses [protein]-peptidylproline (omega=180) = [protein]-peptidylproline (omega=0). Involved in protein export. Acts as a chaperone by maintaining the newly synthesized protein in an open conformation. Functions as a peptidyl-prolyl cis-trans isomerase. This Xanthomonas campestris pv. campestris (strain ATCC 33913 / DSM 3586 / NCPPB 528 / LMG 568 / P 25) protein is Trigger factor.